The sequence spans 828 residues: Vacuolar transporter chaperone complex subunit 2 (828 aa).

Positions 1–146 (MLFGVKLANE…PKYPSVKSLL (146 aa)) constitute an SPX domain. Topologically, residues 1–693 (MLFGVKLANE…EAKVWLANER (693 aa)) are cytoplasmic. The interval 127–134 (KIVKKHDK) is important for inositol polyphosphate binding. Ser-182, Ser-187, Ser-196, Ser-264, Ser-583, Ser-615, and Ser-616 each carry phosphoserine. A disordered region spans residues 580-636 (RRLSNLKEPQHQAAVPVSQEENERITSQGDLEADGSSDEETEQEPHSKRSKKVRRRK). A compositionally biased stretch (acidic residues) spans 610 to 621 (LEADGSSDEETE). At Thr-620 the chain carries Phosphothreonine. Ser-626 bears the Phosphoserine mark. Residues 627-636 (KRSKKVRRRK) show a composition bias toward basic residues. Residue Ser-657 is modified to Phosphoserine. A helical transmembrane segment spans residues 694–716 (TFNRWLSVTSLLSVLTFSIYNSV). The Vacuolar portion of the chain corresponds to 717-727 (KKAEYPTLANY). A helical transmembrane segment spans residues 728–748 (MAYVYFGLTIFCALWSYSIYM). The Cytoplasmic portion of the chain corresponds to 749-766 (KRVDIIQQRSGQHLDAPL). The helical transmembrane segment at 767-787 (GPVLVSIVLFVTLVVNFVMAF) threads the bilayer. Over 788-828 (RNAAKSRQELQIQNLEVPERIPEVLRPLQNYLFKLMGPSSD) the chain is Vacuolar.

Belongs to the VTC2/3 family. The VTC core complex is an integral membrane heterooligomer composed of the catalytic subunit VTC4 and the accessory subunits VTC1, VTC2 and VTC3. The complex exists in 2 different sub-complexes: VTC1-VTC2-VCT4 and VCT1-VTC3-VTC4. The VCT1-VTC3-VTC4 subcomplex is mostly found on the vacuolar membrane. The VTC1-VTC2-VCT4 subcomplex is observed in the cell periphery, probably ER and nuclear envelope, but localizes to the vacuole under phosphate starvation. Each subunit contains 3 transmembrane helices. VTC1 is a small membrane protein without hydrophilic domain. VTC2, VTC3 and VTC4 are related and have 2 hydrophilic domains that face the cytosol, an N-terminal SPX domain and the central core domain. The central core in VTC4 is the catalytic domain, with the essential catalytic lysine replaced by isoleucine and leucine in VTC2 and VTC3, respectively. The core complex associates with the accessory subunit VTC5. The complex interacts with the v-SNARE NYV1 and with the V(0) subunit of V-ATPase VPH1.

The protein resides in the vacuole membrane. Its subcellular location is the cytoplasm. It localises to the cell cortex. The protein localises to the endoplasmic reticulum membrane. It is found in the cytoplasmic vesicle. The protein resides in the autophagosome membrane. Accessory subunit of the vacuolar transporter chaperone (VTC) complex. The VTC complex acts as a vacuolar polyphosphate polymerase that catalyzes the synthesis of inorganic polyphosphate (polyP) via transfer of phosphate from ATP to a growing polyP chain, releasing ADP. VTC exposes its catalytic domain VTC4 to the cytosol, where the growing polyP chain winds through a tunnel-shaped pocket, integrating cytoplasmic polymer synthesis with polyP membrane translocation. The VTC complex carries 9 vacuolar transmembrane domains, which are likely to constitute the translocation channel into the organelle lumen. PolyP synthesis is tightly coupled to its transport into the vacuole lumen, in order to avoid otherwise toxic intermediates in the cytosol, and it depends on the proton gradient across the membrane, formed by V-ATPase. Binds inositol hexakisphosphate (Ins6P) and similar inositol polyphosphates, such as 5-diphospho-inositol pentakisphosphate (5-InsP7); these are important intracellular signaling molecules. Inositol polyphosphate binding promotes vacuolar polyphosphate synthesis. The VTC complex also plays a role in vacuolar membrane fusion. Required for SEC18/NSF activity in SNARE priming, membrane binding of LMA1 and V(0) trans-complex formation. The protein is Vacuolar transporter chaperone complex subunit 2 of Saccharomyces cerevisiae (strain ATCC 204508 / S288c) (Baker's yeast).